The sequence spans 130 residues: Small ribosomal subunit protein uS11 (130 aa).

Belongs to the universal ribosomal protein uS11 family. As to quaternary structure, part of the 30S ribosomal subunit. Interacts with proteins S7 and S18. Binds to IF-3.

In terms of biological role, located on the platform of the 30S subunit, it bridges several disparate RNA helices of the 16S rRNA. Forms part of the Shine-Dalgarno cleft in the 70S ribosome. In Campylobacter jejuni subsp. jejuni serotype O:6 (strain 81116 / NCTC 11828), this protein is Small ribosomal subunit protein uS11.